The chain runs to 382 residues: UDP-N-acetylglucosamine--N-acetylmuramyl-(pentapeptide) pyrophosphoryl-undecaprenol N-acetylglucosamine transferase (382 aa).

UDP-N-acetyl-alpha-D-glucosamine contacts are provided by residues 22–24, N134, R186, S212, 285–290, and Q311; these read TGG and ALTVAE.

It belongs to the glycosyltransferase 28 family. MurG subfamily.

The protein resides in the cell inner membrane. The enzyme catalyses di-trans,octa-cis-undecaprenyl diphospho-N-acetyl-alpha-D-muramoyl-L-alanyl-D-glutamyl-meso-2,6-diaminopimeloyl-D-alanyl-D-alanine + UDP-N-acetyl-alpha-D-glucosamine = di-trans,octa-cis-undecaprenyl diphospho-[N-acetyl-alpha-D-glucosaminyl-(1-&gt;4)]-N-acetyl-alpha-D-muramoyl-L-alanyl-D-glutamyl-meso-2,6-diaminopimeloyl-D-alanyl-D-alanine + UDP + H(+). It functions in the pathway cell wall biogenesis; peptidoglycan biosynthesis. Its function is as follows. Cell wall formation. Catalyzes the transfer of a GlcNAc subunit on undecaprenyl-pyrophosphoryl-MurNAc-pentapeptide (lipid intermediate I) to form undecaprenyl-pyrophosphoryl-MurNAc-(pentapeptide)GlcNAc (lipid intermediate II). The protein is UDP-N-acetylglucosamine--N-acetylmuramyl-(pentapeptide) pyrophosphoryl-undecaprenol N-acetylglucosamine transferase of Pseudoalteromonas atlantica (strain T6c / ATCC BAA-1087).